The sequence spans 95 residues: Small ribosomal subunit protein uS19 (95 aa).

Residues 75 to 95 (APTRSFRGHGGKKADKRGKMK) form a disordered region. The span at 80–95 (FRGHGGKKADKRGKMK) shows a compositional bias: basic residues.

It belongs to the universal ribosomal protein uS19 family.

In terms of biological role, protein S19 forms a complex with S13 that binds strongly to the 16S ribosomal RNA. In Roseiflexus sp. (strain RS-1), this protein is Small ribosomal subunit protein uS19.